The following is a 515-amino-acid chain: Ecdysteroid UDP-glucosyltransferase (515 aa).

An N-terminal signal peptide occupies residues 1 to 31; sequence MKMIILVVSLHVLRNSAAVRVLCMFPTPSYS.

It belongs to the UDP-glycosyltransferase family.

In terms of biological role, catalyzes the transfer of glucose from UDP-glucose to ecdysteroids which are insect molting hormones. Expression of egt interferes with normal insect development and block molting. This Spodoptera littoralis nuclear polyhedrosis virus (SlNPV) protein is Ecdysteroid UDP-glucosyltransferase (EGT).